Here is a 327-residue protein sequence, read N- to C-terminus: Aspartate--ammonia ligase (327 aa).

This sequence belongs to the class-II aminoacyl-tRNA synthetase family. AsnA subfamily.

Its subcellular location is the cytoplasm. The enzyme catalyses L-aspartate + NH4(+) + ATP = L-asparagine + AMP + diphosphate + H(+). Its pathway is amino-acid biosynthesis; L-asparagine biosynthesis; L-asparagine from L-aspartate (ammonia route): step 1/1. The sequence is that of Aspartate--ammonia ligase from Bacillus cytotoxicus (strain DSM 22905 / CIP 110041 / 391-98 / NVH 391-98).